We begin with the raw amino-acid sequence, 2181 residues long: Non-reducing polyketide synthase dpmaA (2181 aa).

The interval 74–180 (QWVKGNSTQP…LALCCGAYID (107 aa)) is N-terminal acylcarrier protein transacylase domain (SAT). The 433-residue stretch at 347 to 779 (QAQLLVLGPV…GTNAAMLVCQ (433 aa)) folds into the Ketosynthase family 3 (KS3) domain. Active-site for beta-ketoacyl synthase activity residues include Cys-525, His-661, and His-702. The malonyl-CoA:ACP transacylase (MAT) domain stretch occupies residues 891 to 1193 (VLAGQTGRRV…SFYPAALGEP (303 aa)). Ser-977 acts as the For acyl/malonyl transferase activity in catalysis. The tract at residues 1269 to 1401 (VSLIGKTQNA…GVITLQEVYS (133 aa)) is N-terminal hotdog fold. A PKS/mFAS DH domain is found at 1269–1579 (VSLIGKTQNA…FQKIAISSLK (311 aa)). The segment at 1276–1573 (QNAGVQTVEY…TILGAKFQKI (298 aa)) is product template (PT) domain. Residues 1425-1579 (SASVVQGDFI…FQKIAISSLK (155 aa)) form a C-terminal hotdog fold region. The span at 1587-1603 (GVPQTSGGRTPSSSITE) shows a compositional bias: polar residues. Disordered regions lie at residues 1587-1618 (GVPQ…PIPG) and 1652-1675 (ISGS…AMET). Positions 1653 to 1670 (SGSSRSTSSSPPSLESRS) are enriched in low complexity. Positions 1677–1753 (EITEGAGSAL…TLFHTIFPQQ (77 aa)) constitute a Carrier domain. Ser-1713 is modified (O-(pantetheine 4'-phosphoryl)serine). The methyltransferase (CMeT) domain stretch occupies residues 1982-2164 (EFMNCLFSYN…QSGFDHIDWT (183 aa)).

Its pathway is secondary metabolite biosynthesis; terpenoid biosynthesis. In terms of biological role, non-reducing polyketide synthase; part of the gene cluster that mediates the biosynthesis of the diterpenoid pyrones subglutinols A and B. The first step of the pathway is the synthesis of the alpha-pyrone moiety by the polyketide synthase dpmaA via condensation of one acetyl-CoA starter unit with 3 malonyl-CoA units and 2 methylations. The alpha-pyrone is then combined with geranylgeranyl pyrophosphate (GGPP) formed by the GGPP synthase dpmaD through the action of the prenyltransferase dpmaC to yield a linear alpha-pyrone diterpenoid. Subsequent steps in the diterpenoid pyrone biosynthetic pathway involve the decalin core formation, which is initiated by the epoxidation of the C10-C11 olefin by the FAD-dependent oxidoreductase dpmaE, and is followed by a cyclization cascade catalyzed by the terpene cyclase dpmaB. The dehydrogenase dpmaF is then involved in tetrahydrofuran (THF) ring formation at the C5 unit to complete the formation of subglutinols A and B. This Metarhizium anisopliae (Entomophthora anisopliae) protein is Non-reducing polyketide synthase dpmaA.